A 485-amino-acid chain; its full sequence is Glutamyl-tRNA(Gln) amidotransferase subunit A (485 aa).

Active-site charge relay system residues include lysine 79 and serine 154. The active-site Acyl-ester intermediate is serine 178.

This sequence belongs to the amidase family. GatA subfamily. In terms of assembly, heterotrimer of A, B and C subunits.

The enzyme catalyses L-glutamyl-tRNA(Gln) + L-glutamine + ATP + H2O = L-glutaminyl-tRNA(Gln) + L-glutamate + ADP + phosphate + H(+). In terms of biological role, allows the formation of correctly charged Gln-tRNA(Gln) through the transamidation of misacylated Glu-tRNA(Gln) in organisms which lack glutaminyl-tRNA synthetase. The reaction takes place in the presence of glutamine and ATP through an activated gamma-phospho-Glu-tRNA(Gln). The chain is Glutamyl-tRNA(Gln) amidotransferase subunit A from Staphylococcus aureus (strain Mu3 / ATCC 700698).